Consider the following 133-residue polypeptide: Putative HTH-type transcriptional regulator YwnA (133 aa).

An HTH rrf2-type domain is found at 1–130 (MINSRLAVAI…ASKSLKDVMN (130 aa)). Positions 24-47 (SEIIADSVNTNPVVVRRMISLLKK) form a DNA-binding region, H-T-H motif.

The polypeptide is Putative HTH-type transcriptional regulator YwnA (ywnA) (Bacillus subtilis (strain 168)).